The sequence spans 73 residues: Large ribosomal subunit protein bL31 (73 aa).

The protein belongs to the bacterial ribosomal protein bL31 family. Type A subfamily. Part of the 50S ribosomal subunit.

In terms of biological role, binds the 23S rRNA. This Cereibacter sphaeroides (strain ATCC 17029 / ATH 2.4.9) (Rhodobacter sphaeroides) protein is Large ribosomal subunit protein bL31.